The primary structure comprises 416 residues: Notoamide biosynthesis cluster protein N' (416 aa).

The signal sequence occupies residues 1–16; the sequence is MRAALLTLAFTALAAA. Asn119 and Asn262 each carry an N-linked (GlcNAc...) asparagine glycan.

Part of the gene cluster that mediates the biosynthesis of notoamide, a fungal indole alkaloid that belongs to a family of natural products containing a characteristic bicyclo[2.2.2]diazaoctane core. The first step of notoamide biosynthesis involves coupling of L-proline and L-tryptophan by the bimodular NRPS notE', to produce cyclo-L-tryptophan-L-proline called brevianamide F. The reverse prenyltransferase notF' then acts as a deoxybrevianamide E synthase and converts brevianamide F to deoxybrevianamide E via reverse prenylation at C-2 of the indole ring leading to the bicyclo[2.2.2]diazaoctane core. Deoxybrevianamide E is further hydroxylated at C-6 of the indole ring, likely catalyzed by the cytochrome P450 monooxygenase notG', to yield 6-hydroxy-deoxybrevianamide E. 6-hydroxy-deoxybrevianamide E is a specific substrate of the prenyltransferase notC' for normal prenylation at C-7 to produce 6-hydroxy-7-prenyl-deoxybrevianamide, also called notoamide S. As the proposed pivotal branching point in notoamide biosynthesis, notoamide S can be diverted to notoamide E through an oxidative pyran ring closure putatively catalyzed by either notH' cytochrome P450 monooxygenase or the notD' FAD-linked oxidoreductase. This step would be followed by an indole 2,3-epoxidation-initiated pinacol-like rearrangement catalyzed by the notB' FAD-dependent monooxygenase leading to the formation of notoamide C and notoamide D. On the other hand notoamide S is converted to notoamide T by notH' (or notD'), a bifunctional oxidase that also functions as the intramolecular Diels-Alderase responsible for generation of (-)-notoamide T. To generate antipodal (+)-notoaminide T, notH (or notD) in Aspergillus strain MF297-2 is expected to catalyze a Diels-Alder reaction leading to the opposite stereochemistry. The remaining oxidoreductase notD' (or notH') likely catalyzes the oxidative pyran ring formation to yield (-)-stephacidin A. The FAD-dependent monooxygenase notI' is highly similar to notB' and is predicted to catalyze a similar conversion from (-)-stephacidin A to (+)-notoamide B via the 2,3-epoxidation of (-)-stephacidin A followed by a pinacol-type rearrangement. Finally, it remains unclear which enzyme could be responsible for the final hydroxylation steps leading to notoamide A and sclerotiamide. The function of notN' in the notoamide biosynthesis has not been determined yet. The protein is Notoamide biosynthesis cluster protein N' of Aspergillus versicolor.